The following is a 709-amino-acid chain: Polyribonucleotide nucleotidyltransferase (709 aa).

2 residues coordinate Mg(2+): Asp482 and Asp488. Residues 549–608 (PRIITMSIDPDKIREVIGPGGKVINKIIAETGVKIDIEDDGRIFIAATDTEAANKAVRII) form the KH domain. In terms of domain architecture, S1 motif spans 618 to 686 (GKVYTGKVTR…KQGRINLSRK (69 aa)).

This sequence belongs to the polyribonucleotide nucleotidyltransferase family. Mg(2+) is required as a cofactor.

The protein resides in the cytoplasm. It carries out the reaction RNA(n+1) + phosphate = RNA(n) + a ribonucleoside 5'-diphosphate. Involved in mRNA degradation. Catalyzes the phosphorolysis of single-stranded polyribonucleotides processively in the 3'- to 5'-direction. This Heliobacterium modesticaldum (strain ATCC 51547 / Ice1) protein is Polyribonucleotide nucleotidyltransferase.